The primary structure comprises 511 residues: 2-isopropylmalate synthase (511 aa).

Residues 6 to 269 form the Pyruvate carboxyltransferase domain; the sequence is IIIFDTTLRD…YTDIKCENIF (264 aa). Positions 15, 203, 205, and 239 each coordinate Mn(2+). Residues 394–511 are regulatory domain; the sequence is VIEKLSVISG…SLKVEERKMA (118 aa).

The protein belongs to the alpha-IPM synthase/homocitrate synthase family. LeuA type 1 subfamily. Homodimer. Mn(2+) serves as cofactor.

Its subcellular location is the cytoplasm. It catalyses the reaction 3-methyl-2-oxobutanoate + acetyl-CoA + H2O = (2S)-2-isopropylmalate + CoA + H(+). It functions in the pathway amino-acid biosynthesis; L-leucine biosynthesis; L-leucine from 3-methyl-2-oxobutanoate: step 1/4. In terms of biological role, catalyzes the condensation of the acetyl group of acetyl-CoA with 3-methyl-2-oxobutanoate (2-ketoisovalerate) to form 3-carboxy-3-hydroxy-4-methylpentanoate (2-isopropylmalate). The sequence is that of 2-isopropylmalate synthase from Campylobacter jejuni subsp. jejuni serotype O:23/36 (strain 81-176).